We begin with the raw amino-acid sequence, 207 residues long: 8-oxoguanine DNA glycosylase/AP lyase (207 aa).

Residues Lys-129 and Asp-147 contribute to the active site.

This sequence belongs to the type-2 OGG1 family.

It carries out the reaction 2'-deoxyribonucleotide-(2'-deoxyribose 5'-phosphate)-2'-deoxyribonucleotide-DNA = a 3'-end 2'-deoxyribonucleotide-(2,3-dehydro-2,3-deoxyribose 5'-phosphate)-DNA + a 5'-end 5'-phospho-2'-deoxyribonucleoside-DNA + H(+). Catalyzes the excision of an oxidatively damaged form of guanine (7,8-dihydro-8-oxoguanine = 8-oxoG) from DNA. Also cleaves the DNA backbone at apurinic/apyrimidinic sites (AP sites). The sequence is that of 8-oxoguanine DNA glycosylase/AP lyase from Thermotoga sp. (strain RQ2).